Here is a 317-residue protein sequence, read N- to C-terminus: Ribosomal RNA small subunit methyltransferase H (317 aa).

S-adenosyl-L-methionine contacts are provided by residues 30–32 (GGH), D50, Y74, D95, and Q102.

This sequence belongs to the methyltransferase superfamily. RsmH family.

The protein localises to the cytoplasm. It carries out the reaction cytidine(1402) in 16S rRNA + S-adenosyl-L-methionine = N(4)-methylcytidine(1402) in 16S rRNA + S-adenosyl-L-homocysteine + H(+). Functionally, specifically methylates the N4 position of cytidine in position 1402 (C1402) of 16S rRNA. The sequence is that of Ribosomal RNA small subunit methyltransferase H from Nitrosomonas europaea (strain ATCC 19718 / CIP 103999 / KCTC 2705 / NBRC 14298).